Consider the following 267-residue polypeptide: 2-keto-3-deoxy-L-rhamnonate aldolase (267 aa).

The active-site Proton acceptor is the His49. Gln151 contributes to the substrate binding site. Glu153 serves as a coordination point for Mg(2+). The substrate site is built by Ala178 and Asp179. Residue Asp179 participates in Mg(2+) binding.

It belongs to the HpcH/HpaI aldolase family. KDR aldolase subfamily. As to quaternary structure, homohexamer. Mg(2+) is required as a cofactor.

The enzyme catalyses 2-dehydro-3-deoxy-L-rhamnonate = (S)-lactaldehyde + pyruvate. Its function is as follows. Catalyzes the reversible retro-aldol cleavage of 2-keto-3-deoxy-L-rhamnonate (KDR) to pyruvate and lactaldehyde. This Escherichia coli O17:K52:H18 (strain UMN026 / ExPEC) protein is 2-keto-3-deoxy-L-rhamnonate aldolase.